The chain runs to 311 residues: 3-oxo-4,17-pregnadiene-20-carboxyl-CoA hydratase alpha subunit (311 aa).

Residues Trp198–Thr295 are DUF35.

This sequence belongs to the thioester dehydratase family. Heterodimer composed of ChsH1 and ChsH2. Two heterodimers combine to form a heterotetramer. The complex interacts with Ltp2 via the DUF35 C-terminal region of ChsH2. The ChsH1-ChsH2-Ltp2 protein complex is composed of two protomers that form a heterohexameric structure through the Ltp2 dimerization interface.

The catalysed reaction is 3-oxochola-4,17-dien-22-oyl-CoA + H2O = 17-hydroxy-3-oxochol-4-en-22-oyl-CoA. It carries out the reaction (2E)-octenoyl-CoA + H2O = 3-hydroxyoctanoyl-CoA. It catalyses the reaction (2E)-decenoyl-CoA + H2O = 3-hydroxydecanoyl-CoA. Its pathway is steroid metabolism; cholesterol degradation. With respect to regulation, in the absence of the Ltp2 aldolase, ChsH1/ChsH2 can hydrate only about 30% of the 3-OPDC-CoA substrate. Complete turnover requires the presence of Ltp2. Its function is as follows. Involved in cholesterol side chain degradation. Catalyzes the hydration of 3-oxo-4,17-pregnadiene-20-carboxyl-CoA (3-OPDC-CoA) to form 17-hydroxy-3-oxo-4-pregnene-20-carboxyl-CoA (17-HOPC-CoA), in the modified beta-oxidation pathway for cholesterol side chain degradation. Can also use octenoyl-CoA and decenoyl-CoA, with lower efficiency. The chain is 3-oxo-4,17-pregnadiene-20-carboxyl-CoA hydratase alpha subunit from Mycobacterium tuberculosis (strain ATCC 25618 / H37Rv).